The primary structure comprises 906 residues: Protein translocase subunit SecA (906 aa).

ATP-binding positions include Gln-86, 104–108 (GEGKT), and Asp-499. The disordered stretch occupies residues 863–887 (PVVSRIDPKDRNPDDPTSWGRVSRN). Zn(2+)-binding residues include Cys-890, Cys-892, Cys-901, and His-902.

It belongs to the SecA family. In terms of assembly, monomer and homodimer. Part of the essential Sec protein translocation apparatus which comprises SecA, SecYEG and auxiliary proteins SecDF-YajC and YidC. Zn(2+) serves as cofactor.

The protein localises to the cell inner membrane. It is found in the cytoplasm. The enzyme catalyses ATP + H2O + cellular proteinSide 1 = ADP + phosphate + cellular proteinSide 2.. Part of the Sec protein translocase complex. Interacts with the SecYEG preprotein conducting channel. Has a central role in coupling the hydrolysis of ATP to the transfer of proteins into and across the cell membrane, serving both as a receptor for the preprotein-SecB complex and as an ATP-driven molecular motor driving the stepwise translocation of polypeptide chains across the membrane. The protein is Protein translocase subunit SecA of Rickettsia rickettsii (strain Iowa).